The sequence spans 388 residues: Succinate--CoA ligase [ADP-forming] subunit beta (388 aa).

The region spanning 9 to 244 (KQLFARYGLP…QSQEDPREAQ (236 aa)) is the ATP-grasp domain. ATP contacts are provided by residues lysine 46, 53-55 (GRG), glutamate 99, threonine 102, and glutamate 107. Positions 199 and 213 each coordinate Mg(2+). Substrate-binding positions include asparagine 264 and 321–323 (GIV).

Belongs to the succinate/malate CoA ligase beta subunit family. In terms of assembly, heterotetramer of two alpha and two beta subunits. It depends on Mg(2+) as a cofactor.

The catalysed reaction is succinate + ATP + CoA = succinyl-CoA + ADP + phosphate. It carries out the reaction GTP + succinate + CoA = succinyl-CoA + GDP + phosphate. Its pathway is carbohydrate metabolism; tricarboxylic acid cycle; succinate from succinyl-CoA (ligase route): step 1/1. Its function is as follows. Succinyl-CoA synthetase functions in the citric acid cycle (TCA), coupling the hydrolysis of succinyl-CoA to the synthesis of either ATP or GTP and thus represents the only step of substrate-level phosphorylation in the TCA. The beta subunit provides nucleotide specificity of the enzyme and binds the substrate succinate, while the binding sites for coenzyme A and phosphate are found in the alpha subunit. The polypeptide is Succinate--CoA ligase [ADP-forming] subunit beta (Shigella dysenteriae serotype 1 (strain Sd197)).